Consider the following 314-residue polypeptide: Small ribosomal subunit biogenesis GTPase RsgA (314 aa).

A CP-type G domain is found at 78-238 (SEIFREKLIA…IIDSPGFQEF (161 aa)). GTP contacts are provided by residues 127 to 130 (NKID) and 180 to 188 (GQSGVGKST). The Zn(2+) site is built by Cys-262, Cys-267, His-269, and Cys-275.

This sequence belongs to the TRAFAC class YlqF/YawG GTPase family. RsgA subfamily. As to quaternary structure, monomer. Associates with 30S ribosomal subunit, binds 16S rRNA. Requires Zn(2+) as cofactor.

The protein resides in the cytoplasm. In terms of biological role, one of several proteins that assist in the late maturation steps of the functional core of the 30S ribosomal subunit. Helps release RbfA from mature subunits. May play a role in the assembly of ribosomal proteins into the subunit. Circularly permuted GTPase that catalyzes slow GTP hydrolysis, GTPase activity is stimulated by the 30S ribosomal subunit. The sequence is that of Small ribosomal subunit biogenesis GTPase RsgA from Nitrosomonas europaea (strain ATCC 19718 / CIP 103999 / KCTC 2705 / NBRC 14298).